Here is a 541-residue protein sequence, read N- to C-terminus: MHTLIKGILEEILEEEVIVEYPKDREHGHYATPIAFNLAKVFKKSPLAIAEELALKISTHEKTQGLFDSVVACKGYINFTLSLDFLERFTQKALELKEKFGSQVKSERSQKIFLEFVSANPTGPLHIGHARGAVFGDSLAKIARFLGHEVLCEYYVNDMGSQIRLLGLSVWLAYREHVLKESVTYPEVFYKGEYIIEIAKKANNDLEPSLLKENEETIIEVLSGYARDLMLLEIKDNLDALGIHFDSYASEKEVFKHKDAVFEQLEKANALYEKDSKIWLKSSLYQDESDRVLIKEDKSYTYLAGDIVYHDEKFKQDYTKYINIWGADHHGYIARVKASLEFLGYDSNKLEVLLAQMVRLLKDNEPYKMSKRAGNFILIKDVVDDVGKDALRFIFLSKRLDTHLEFDVNTLKKQDSSNPIYYIHYANSRIHTMLEKSPFSKEEVLQTPLTNLNAEEKYLLFSALSLPKAIESSFEEYGLQKMCEYAKTLASEFHRFYNAGKILDTPKAKELLKICLIVSLSLSNAFKLLGIEIKTKISARD.

Residues 119–129 (ANPTGPLHIGH) carry the 'HIGH' region motif.

This sequence belongs to the class-I aminoacyl-tRNA synthetase family. In terms of assembly, monomer.

It is found in the cytoplasm. It catalyses the reaction tRNA(Arg) + L-arginine + ATP = L-arginyl-tRNA(Arg) + AMP + diphosphate. This chain is Arginine--tRNA ligase (argS), found in Helicobacter pylori (strain ATCC 700392 / 26695) (Campylobacter pylori).